The primary structure comprises 391 residues: DNA-directed RNA polymerase I subunit RPA43 (391 aa).

2 disordered regions span residues Met-1–Ser-27 and Gln-220–Lys-391. The span at Gly-288–Arg-299 shows a compositional bias: basic residues. Residues Arg-289–Ile-353 adopt a coiled-coil conformation. The segment covering Met-312–Asp-323 has biased composition (polar residues). The segment covering Lys-336–Asp-345 has biased composition (basic residues).

This sequence belongs to the eukaryotic RPA43 RNA polymerase subunit family. As to quaternary structure, component of the RNA polymerase I (Pol I) complex consisting of at least 13 subunits.

Its subcellular location is the nucleus. The protein resides in the nucleolus. In terms of biological role, DNA-dependent RNA polymerase catalyzes the transcription of DNA into RNA using the four ribonucleoside triphosphates as substrates. Component of RNA polymerase I which synthesizes ribosomal RNA precursors. May be involved in recruitment of Pol I to rDNA promoters. This is DNA-directed RNA polymerase I subunit RPA43 from Danio rerio (Zebrafish).